The sequence spans 251 residues: Hydroxyacylglutathione hydrolase (251 aa).

Residues histidine 53, histidine 55, aspartate 57, histidine 58, histidine 110, aspartate 127, and histidine 165 each coordinate Zn(2+).

Belongs to the metallo-beta-lactamase superfamily. Glyoxalase II family. As to quaternary structure, monomer. The cofactor is Zn(2+).

The enzyme catalyses an S-(2-hydroxyacyl)glutathione + H2O = a 2-hydroxy carboxylate + glutathione + H(+). It participates in secondary metabolite metabolism; methylglyoxal degradation; (R)-lactate from methylglyoxal: step 2/2. Thiolesterase that catalyzes the hydrolysis of S-D-lactoyl-glutathione to form glutathione and D-lactic acid. This is Hydroxyacylglutathione hydrolase from Shigella boydii serotype 18 (strain CDC 3083-94 / BS512).